Reading from the N-terminus, the 330-residue chain is GTP 3',8-cyclase (330 aa).

The Radical SAM core domain occupies 14-225 (RFGRTVDYVR…RERLADAYPE (212 aa)). Arg-23 serves as a coordination point for GTP. [4Fe-4S] cluster-binding residues include Cys-30 and Cys-34. Residue Tyr-36 participates in S-adenosyl-L-methionine binding. Residue Cys-37 coordinates [4Fe-4S] cluster. Arg-70 contacts GTP. An S-adenosyl-L-methionine-binding site is contributed by Gly-74. A GTP-binding site is contributed by Thr-101. An S-adenosyl-L-methionine-binding site is contributed by Ser-125. A GTP-binding site is contributed by Lys-162. Residues Cys-259 and Cys-262 each coordinate [4Fe-4S] cluster. Residue 264-266 (KLR) coordinates GTP. Residue Cys-276 participates in [4Fe-4S] cluster binding. The segment covering 309–318 (KPKDGLKSSH) has biased composition (basic and acidic residues). Residues 309-330 (KPKDGLKSSHDTAASSMSQIGG) are disordered. Polar residues predominate over residues 319–330 (DTAASSMSQIGG).

Belongs to the radical SAM superfamily. MoaA family. In terms of assembly, monomer and homodimer. The cofactor is [4Fe-4S] cluster.

It catalyses the reaction GTP + AH2 + S-adenosyl-L-methionine = (8S)-3',8-cyclo-7,8-dihydroguanosine 5'-triphosphate + 5'-deoxyadenosine + L-methionine + A + H(+). It functions in the pathway cofactor biosynthesis; molybdopterin biosynthesis. Its function is as follows. Catalyzes the cyclization of GTP to (8S)-3',8-cyclo-7,8-dihydroguanosine 5'-triphosphate. The chain is GTP 3',8-cyclase from Chlorobaculum tepidum (strain ATCC 49652 / DSM 12025 / NBRC 103806 / TLS) (Chlorobium tepidum).